A 738-amino-acid chain; its full sequence is Phosphoribosylformylglycinamidine synthase subunit PurL (738 aa).

The active site involves histidine 53. Positions 56 and 95 each coordinate ATP. Glutamate 97 contacts Mg(2+). Substrate is bound by residues 98-101 (SHNH) and arginine 120. Residue histidine 99 is the Proton acceptor of the active site. Aspartate 121 contacts Mg(2+). Glutamine 244 is a binding site for substrate. Residue aspartate 274 participates in Mg(2+) binding. A substrate-binding site is contributed by 318–320 (ESQ). ATP-binding residues include aspartate 499 and glycine 536. Asparagine 537 provides a ligand contact to Mg(2+). Serine 539 contacts substrate.

Belongs to the FGAMS family. As to quaternary structure, monomer. Part of the FGAM synthase complex composed of 1 PurL, 1 PurQ and 2 PurS subunits.

Its subcellular location is the cytoplasm. It catalyses the reaction N(2)-formyl-N(1)-(5-phospho-beta-D-ribosyl)glycinamide + L-glutamine + ATP + H2O = 2-formamido-N(1)-(5-O-phospho-beta-D-ribosyl)acetamidine + L-glutamate + ADP + phosphate + H(+). It participates in purine metabolism; IMP biosynthesis via de novo pathway; 5-amino-1-(5-phospho-D-ribosyl)imidazole from N(2)-formyl-N(1)-(5-phospho-D-ribosyl)glycinamide: step 1/2. In terms of biological role, part of the phosphoribosylformylglycinamidine synthase complex involved in the purines biosynthetic pathway. Catalyzes the ATP-dependent conversion of formylglycinamide ribonucleotide (FGAR) and glutamine to yield formylglycinamidine ribonucleotide (FGAM) and glutamate. The FGAM synthase complex is composed of three subunits. PurQ produces an ammonia molecule by converting glutamine to glutamate. PurL transfers the ammonia molecule to FGAR to form FGAM in an ATP-dependent manner. PurS interacts with PurQ and PurL and is thought to assist in the transfer of the ammonia molecule from PurQ to PurL. This chain is Phosphoribosylformylglycinamidine synthase subunit PurL, found in Lacticaseibacillus paracasei (strain ATCC 334 / BCRC 17002 / CCUG 31169 / CIP 107868 / KCTC 3260 / NRRL B-441) (Lactobacillus paracasei).